The primary structure comprises 178 residues: MAPPPPAPPSVTLRTVLLLLRVLTAAFLLITVVLISTNTVTLEISSTSIKLPFNDVYAYRYMLSAAVIGLVYAVVQLFLTISQFATGKTHPLTYQFDFYGDKVISYLLATGSAAGFGVSKDLKDTYIALIEFDSTDPVDKFFSKGYASASLLLFAFVSLAVLSVFSSLALSKRPVPVS.

Alanine 2 bears the N-acetylalanine mark. The Cytoplasmic segment spans residues 2-14 (APPPPAPPSVTLR). The chain crosses the membrane as a helical span at residues 15-35 (TVLLLLRVLTAAFLLITVVLI). The Extracellular segment spans residues 36 to 60 (STNTVTLEISSTSIKLPFNDVYAYR). The helical transmembrane segment at 61-81 (YMLSAAVIGLVYAVVQLFLTI) threads the bilayer. The Cytoplasmic portion of the chain corresponds to 82–97 (SQFATGKTHPLTYQFD). Residues 98-118 (FYGDKVISYLLATGSAAGFGV) traverse the membrane as a helical segment. Topologically, residues 119–149 (SKDLKDTYIALIEFDSTDPVDKFFSKGYASA) are extracellular. The chain crosses the membrane as a helical span at residues 150–170 (SLLLFAFVSLAVLSVFSSLAL). Over 171–178 (SKRPVPVS) the chain is Cytoplasmic.

The protein belongs to the Casparian strip membrane proteins (CASP) family. In terms of assembly, homodimer and heterodimers. In terms of tissue distribution, expressed in the root epidermis.

It is found in the cell membrane. The protein is CASP-like protein 4D1 of Arabidopsis thaliana (Mouse-ear cress).